The chain runs to 482 residues: Protein DETOXIFICATION 13 (482 aa).

A run of 12 helical transmembrane segments spans residues 39–59, 77–97, 124–144, 159–179, 188–208, 218–238, 268–288, 297–317, 337–357, 381–401, 416–436, and 439–459; these read LICF…LQII, LASS…SCAL, LALV…LLVF, AACL…TRYF, LLIT…LLVY, ALAL…LMCF, AAMI…SGLL, VLSV…AIAA, IVVY…STSL, MAPL…LSGI, LGAF…WIHL, and VGLW…LTLV.

It belongs to the multi antimicrobial extrusion (MATE) (TC 2.A.66.1) family.

The protein resides in the membrane. The sequence is that of Protein DETOXIFICATION 13 from Arabidopsis thaliana (Mouse-ear cress).